The sequence spans 377 residues: Nitric oxide reductase FlRd-NAD(+) reductase (377 aa).

This sequence belongs to the FAD-dependent oxidoreductase family. Requires FAD as cofactor.

Its subcellular location is the cytoplasm. The catalysed reaction is 2 reduced [nitric oxide reductase rubredoxin domain] + NAD(+) + H(+) = 2 oxidized [nitric oxide reductase rubredoxin domain] + NADH. It participates in nitrogen metabolism; nitric oxide reduction. In terms of biological role, one of at least two accessory proteins for anaerobic nitric oxide (NO) reductase. Reduces the rubredoxin moiety of NO reductase. This chain is Nitric oxide reductase FlRd-NAD(+) reductase, found in Escherichia coli (strain SE11).